A 416-amino-acid chain; its full sequence is Sulfoquinovosyl glycerol-binding protein SmoF (416 aa).

A signal peptide spans 1–29; it reads MTLKTIRGKALMGAALCATMLTFSGQAFA. Glutamine 40 is a binding site for 3-(6-sulfo-alpha-D-quinovosyl)glycerol. Histidine 41 contributes to the 6-sulfo-D-quinovose binding site. The 3-(6-sulfo-alpha-D-quinovosyl)glycerol site is built by serine 71, aspartate 95, aspartate 141, glycine 194, threonine 248, glycine 303, tryptophan 304, and arginine 373. 6-sulfo-D-quinovose contacts are provided by glycine 303, tryptophan 304, and arginine 373.

It belongs to the bacterial solute-binding protein 1 family. The complex is probably composed of two ATP-binding proteins (SmoE), two transmembrane proteins (SmoG and SmoH) and a solute-binding protein (SmoF).

The protein resides in the periplasm. Its function is as follows. Part of the ABC transporter complex SmoEFGH involved in sulfoquinovosyl glycerol (SQGro) uptake. Binds sulfoquinovosyl glycerol (SQGro). Can also bind sulfoquinovose (SQ), methyl alpha-sulfoquinovoside (SQMe) and a short-chain derivative of sulfoquinovosyl diacylglycerol (SQDG). Cannot bind D-glucose and D-glucuronic acid. The polypeptide is Sulfoquinovosyl glycerol-binding protein SmoF (Agrobacterium fabrum (strain C58 / ATCC 33970) (Agrobacterium tumefaciens (strain C58))).